The sequence spans 655 residues: Putative phagocytic receptor 1c (655 aa).

An N-terminal signal peptide occupies residues 1-20; sequence MLNIIVVLLLLFFSNNVIDS. The span at 146 to 173 shows a compositional bias: low complexity; sequence SNSKSSEITSPPSSPSSSSSSSSSPSSS. Residues 146-185 form a disordered region; it reads SNSKSSEITSPPSSPSSSSSSSSSPSSSIEEEDDDDTEND. Over residues 174-183 the composition is skewed to acidic residues; the sequence is IEEEDDDDTE. 9 helical membrane passes run 300-320, 359-379, 387-407, 428-448, 461-481, 518-538, 550-570, 587-607, and 619-639; these read IDII…AIIL, FSII…LMVF, IATP…TGIF, SVIT…IGYF, IGTV…CSLL, MILG…FFLS, LSFA…NMII, LLGP…FGIT, and FMFS…IGFL.

This sequence belongs to the nonaspanin (TM9SF) (TC 9.A.2) family.

The protein localises to the membrane. The polypeptide is Putative phagocytic receptor 1c (phg1c) (Dictyostelium discoideum (Social amoeba)).